The chain runs to 501 residues: Aldehyde dehydrogenase 1A1 (501 aa).

Residue Ser-2 is modified to N-acetylserine. N6-acetyllysine occurs at positions 91 and 128. NAD(+)-binding positions include 167–170, 193–196, 226–227, and 246–247; these read IPWN, KPAE, GP, and GS. Residue Lys-252 is modified to N6-acetyllysine. Glu-269 serves as the catalytic Proton acceptor. 269-271 provides a ligand contact to NAD(+); that stretch reads ELG. Cys-303 acts as the Nucleophile in catalysis. Residues 336–501 are mediates interaction with PRMT3; it reads LTPGVSQGPQ…VTIKISQKNS (166 aa). Position 337 is a phosphothreonine (Thr-337). 349-353 is a binding site for NAD(+); sequence EQYEK. Lys-353 and Lys-367 each carry N6-acetyllysine. 400–402 is a binding site for NAD(+); that stretch reads EIF. N6-acetyllysine is present on Lys-410. Phosphoserine is present on Ser-413. Residues Lys-419 and Lys-495 each carry the N6-acetyllysine modification.

It belongs to the aldehyde dehydrogenase family. Homotetramer. Interacts with PRMT3; the interaction is direct, inhibits ALDH1A1 aldehyde dehydrogenase activity and is independent of the methyltransferase activity of PRMT3. Post-translationally, the N-terminus is blocked most probably by acetylation.

The protein localises to the cytoplasm. The protein resides in the cytosol. It localises to the cell projection. Its subcellular location is the axon. It catalyses the reaction an aldehyde + NAD(+) + H2O = a carboxylate + NADH + 2 H(+). The catalysed reaction is all-trans-retinal + NAD(+) + H2O = all-trans-retinoate + NADH + 2 H(+). The enzyme catalyses 9-cis-retinal + NAD(+) + H2O = 9-cis-retinoate + NADH + 2 H(+). It carries out the reaction 11-cis-retinal + NAD(+) + H2O = 11-cis-retinoate + NADH + 2 H(+). It catalyses the reaction 13-cis-retinal + NAD(+) + H2O = 13-cis-retinoate + NADH + 2 H(+). The catalysed reaction is 3-deoxyglucosone + NAD(+) + H2O = 2-dehydro-3-deoxy-D-gluconate + NADH + 2 H(+). The enzyme catalyses (E)-4-hydroxynon-2-enal + NAD(+) + H2O = (E)-4-hydroxynon-2-enoate + NADH + 2 H(+). It carries out the reaction malonaldehyde + NAD(+) + H2O = 3-oxopropanoate + NADH + 2 H(+). It catalyses the reaction hexanal + NAD(+) + H2O = hexanoate + NADH + 2 H(+). The catalysed reaction is propanal + NAD(+) + H2O = propanoate + NADH + 2 H(+). The enzyme catalyses acetaldehyde + NAD(+) + H2O = acetate + NADH + 2 H(+). It carries out the reaction benzaldehyde + NAD(+) + H2O = benzoate + NADH + 2 H(+). It catalyses the reaction 4-aminobutanal + NAD(+) + H2O = 4-aminobutanoate + NADH + 2 H(+). The protein operates within cofactor metabolism; retinol metabolism. With respect to regulation, inhibited by duocarmycin analogs. Functionally, cytosolic dehydrogenase that catalyzes the irreversible oxidation of a wide range of aldehydes to their corresponding carboxylic acid. Functions downstream of retinol dehydrogenases and catalyzes the oxidation of retinaldehyde into retinoic acid, the second step in the oxidation of retinol/vitamin A into retinoic acid. This pathway is crucial to control the levels of retinol and retinoic acid, two important molecules which excess can be teratogenic and cytotoxic. Also oxidizes aldehydes resulting from lipid peroxidation like (E)-4-hydroxynon-2-enal/HNE, malonaldehyde and hexanal that form protein adducts and are highly cytotoxic. By participating for instance to the clearance of (E)-4-hydroxynon-2-enal/HNE in the lens epithelium prevents the formation of HNE-protein adducts and lens opacification. Also functions downstream of fructosamine-3-kinase in the fructosamine degradation pathway by catalyzing the oxidation of 3-deoxyglucosone, the carbohydrate product of fructosamine 3-phosphate decomposition, which is itself a potent glycating agent that may react with lysine and arginine side-chains of proteins. Also has an aminobutyraldehyde dehydrogenase activity and is probably part of an alternative pathway for the biosynthesis of GABA/4-aminobutanoate in midbrain, thereby playing a role in GABAergic synaptic transmission. The chain is Aldehyde dehydrogenase 1A1 from Ovis aries (Sheep).